The sequence spans 147 residues: Hemoglobin subunit epsilon (147 aa).

The Globin domain maps to 3–147 (HFTAEEKAAV…VAIALAHKYH (145 aa)). Phosphoserine is present on residues Ser-14 and Ser-51. Heme b-binding residues include His-64 and His-93.

This sequence belongs to the globin family. Heterotetramer of two alpha chains and two epsilon chains in early embryonic hemoglobin Gower-2; two zeta chains and two epsilon chains in early embryonic hemoglobin Gower-1. In terms of tissue distribution, red blood cells.

Functionally, the epsilon chain is a beta-type chain of early mammalian embryonic hemoglobin. This is Hemoglobin subunit epsilon (HBE1) from Pan troglodytes (Chimpanzee).